Consider the following 352-residue polypeptide: Biotin synthase (352 aa).

Positions 44–262 (NRVQVSTLLS…LAVARILMPQ (219 aa)) constitute a Radical SAM core domain. [4Fe-4S] cluster is bound by residues Cys59, Cys63, and Cys66. Residues Cys103, Cys134, Cys194, and Arg266 each contribute to the [2Fe-2S] cluster site.

Belongs to the radical SAM superfamily. Biotin synthase family. In terms of assembly, homodimer. The cofactor is [4Fe-4S] cluster. [2Fe-2S] cluster serves as cofactor.

The catalysed reaction is (4R,5S)-dethiobiotin + (sulfur carrier)-SH + 2 reduced [2Fe-2S]-[ferredoxin] + 2 S-adenosyl-L-methionine = (sulfur carrier)-H + biotin + 2 5'-deoxyadenosine + 2 L-methionine + 2 oxidized [2Fe-2S]-[ferredoxin]. Its pathway is cofactor biosynthesis; biotin biosynthesis; biotin from 7,8-diaminononanoate: step 2/2. In terms of biological role, catalyzes the conversion of dethiobiotin (DTB) to biotin by the insertion of a sulfur atom into dethiobiotin via a radical-based mechanism. This chain is Biotin synthase, found in Pseudomonas syringae pv. tomato (strain ATCC BAA-871 / DC3000).